We begin with the raw amino-acid sequence, 149 residues long: Pleckstrin homology domain-containing family J member 1 (149 aa).

The region spanning 15 to 108 is the PH domain; sequence PAEKAAEILM…WIEALKRASY (94 aa).

In Gallus gallus (Chicken), this protein is Pleckstrin homology domain-containing family J member 1 (PLEKHJ1).